The sequence spans 80 residues: ATP synthase subunit c (80 aa).

2 helical membrane passes run 11-31 and 53-73; these read IAAA…IGIL and FFIV…LGLY.

The protein belongs to the ATPase C chain family. As to quaternary structure, F-type ATPases have 2 components, F(1) - the catalytic core - and F(0) - the membrane proton channel. F(1) has five subunits: alpha(3), beta(3), gamma(1), delta(1), epsilon(1). F(0) has three main subunits: a(1), b(2) and c(10-14). The alpha and beta chains form an alternating ring which encloses part of the gamma chain. F(1) is attached to F(0) by a central stalk formed by the gamma and epsilon chains, while a peripheral stalk is formed by the delta and b chains.

Its subcellular location is the cell inner membrane. F(1)F(0) ATP synthase produces ATP from ADP in the presence of a proton or sodium gradient. F-type ATPases consist of two structural domains, F(1) containing the extramembraneous catalytic core and F(0) containing the membrane proton channel, linked together by a central stalk and a peripheral stalk. During catalysis, ATP synthesis in the catalytic domain of F(1) is coupled via a rotary mechanism of the central stalk subunits to proton translocation. In terms of biological role, key component of the F(0) channel; it plays a direct role in translocation across the membrane. A homomeric c-ring of between 10-14 subunits forms the central stalk rotor element with the F(1) delta and epsilon subunits. The sequence is that of ATP synthase subunit c from Aeromonas hydrophila subsp. hydrophila (strain ATCC 7966 / DSM 30187 / BCRC 13018 / CCUG 14551 / JCM 1027 / KCTC 2358 / NCIMB 9240 / NCTC 8049).